A 274-amino-acid chain; its full sequence is Secreted RxLR effector protein 144 (274 aa).

Positions 1 to 20 (MRPWLLLLVGLSSFFALSTS) are cleaved as a signal peptide. A RxLR-dEER motif is present at residues 49-72 (RKLRAFGGDTNTLKDSGKARREEK).

This sequence belongs to the RxLR effector family.

The protein localises to the secreted. The protein resides in the host nucleus. It localises to the host cytoplasm. Secreted effector that completely suppresses the host cell death induced by cell death-inducing proteins. This is Secreted RxLR effector protein 144 from Plasmopara viticola (Downy mildew of grapevine).